A 434-amino-acid polypeptide reads, in one-letter code: MAMQKIFAREILDSRGNPTVEVDLHTAKGRFRAAVPSGASTGIYEALELRDGDKSRYLGKGVLKAVEHINKTLGPALLEKKLSVVDQEKVDKFMIELDGTENKSKFGANAILGVSLAVCKAGAAEKGVPLYRHIADLAGNHDLVLPVPAFNVINGGSHAGNKLAMQEFMILPVGASSFREAMRIGAEVYHHLKGVIKAKYGKDATNVGDEGGFAPNILENNEALELLKTAIQAAGYPDKVVIGMDVAASEFHRNGKYDLDFKSPDDPARHITGQKLGELYKSFIKNYPVVSIEDPFDQDDWATWTSFLSGVDIQIVGDDLTVTNPKRIAQAVEKKACNCLLLKVNQIGSVTESIQACKLAQSNGWGVMVSHRSGETEDTFIADLVVGLCTGQIKTGAPCRSERLAKYNQLMRIEEALGDKAVFAGRKFRNPKAK.

Ala-2 carries the post-translational modification N-acetylalanine. Residue Thr-72 is modified to Phosphothreonine. Ser-83 and Ser-157 each carry phosphoserine. His-158 and Glu-167 together coordinate substrate. Residue Ser-176 is modified to Phosphoserine. The residue at position 205 (Thr-205) is a Phosphothreonine. Glu-210 (proton donor) is an active-site residue. Position 229 is a phosphothreonine (Thr-229). Phosphotyrosine is present on Tyr-236. Asp-245 is a Mg(2+) binding site. At Ser-263 the chain carries Phosphoserine. Substrate-binding residues include Glu-293 and Asp-318. The Mg(2+) site is built by Glu-293 and Asp-318. Residue Lys-343 is the Proton acceptor of the active site. Substrate is bound by residues 370–373 (SHRS) and Lys-394.

It belongs to the enolase family. Mammalian enolase is composed of 3 isozyme subunits, alpha, beta and gamma, which can form homodimers or heterodimers which are cell-type and development-specific. Interacts with PNKD. Mg(2+) serves as cofactor. The alpha/alpha homodimer is expressed in embryo and in most adult tissues. The alpha/beta heterodimer and the beta/beta homodimer are found in striated muscle, and the alpha/gamma heterodimer and the gamma/gamma homodimer in neurons.

It is found in the cytoplasm. It catalyses the reaction (2R)-2-phosphoglycerate = phosphoenolpyruvate + H2O. It participates in carbohydrate degradation; glycolysis; pyruvate from D-glyceraldehyde 3-phosphate: step 4/5. Glycolytic enzyme that catalyzes the conversion of 2-phosphoglycerate to phosphoenolpyruvate. Appears to have a function in striated muscle development and regeneration. This chain is Beta-enolase (ENO3), found in Oryctolagus cuniculus (Rabbit).